Reading from the N-terminus, the 884-residue chain is E3 SUMO-protein ligase SIZ1 (884 aa).

The SAP domain occupies 11-45 (LSYFRIKELKDVLTQLGLSKQGKKQELVDRILTLL). Positions 84 to 103 (LASKGQVSSDTSNLKVKGEP) are disordered. Polar residues predominate over residues 88-97 (GQVSSDTSNL). Residue Lys100 forms a Glycyl lysine isopeptide (Lys-Gly) (interchain with G-Cter in SUMO) linkage. The PHD-type zinc finger occupies 112–168 (KVRCVCGNSLETDSMIQCEDPRCHVWQHVGCVILPDKPMDGNPPLPESFYCEICRLT). Residues 346-429 (SDSDIEVVAD…FNRITSKMKH (84 aa)) form an SP-RING-type zinc finger. Residues Cys379, His381, Cys402, and Cys405 each contribute to the Zn(2+) site. Lys488 participates in a covalent cross-link: Glycyl lysine isopeptide (Lys-Gly) (interchain with G-Cter in SUMO). Disordered stretches follow at residues 753 to 778 (PSLQ…ADMS), 792 to 824 (GDSA…MDTT), and 836 to 869 (DSRQ…QTRH). Composition is skewed to polar residues over residues 766–778 (SAQS…ADMS) and 803–824 (ATTN…MDTT). Basic and acidic residues predominate over residues 837 to 847 (SRQDKAKKQRS).

It belongs to the PIAS family. In terms of assembly, interacts (via PHD domain) with SCE1, GTE3 and GTE5. Post-translationally, autosumoylated at Lys-100 and Lys-488. Ubiquitous.

It localises to the nucleus speckle. It functions in the pathway protein modification; protein sumoylation. Functionally, E3 SUMO protein ligase involved in regulation processes. Mediates SUMO/ attachment to PHR1, a MYB transcriptional activator controlling the phosphate deficiency responses. Functions as an upstream negative regulator of salicylic acid (SA) accumulation and subsequent SA-mediated systemic acquired resistance (SAR) signaling. Probably not involved in jasmonic acid (JA)-mediated defense response. Participates in abiotic stress-induced sumoylation. Controls heat shock-induced SUMO1 and SUMO2 conjugation and facilitates basal thermotolerance. Involved in freezing tolerance by mediating sumoylation of ICE1, a transcription activator of the cold signaling regulator CBF3/DREB1A. Acts as a positive regulator of drought stress tolerance. Acts as a floral repressor that promotes FLC expression by repressing FLD activity through sumoylation. Acts as a negative regulator of abscisic acid (ABA) signaling through ABI5 sumoylation. Mediates sumoylation of SCE1, GTE3 and GTE5. Functions as a negative regulator of SnRK1 signaling through sumoylation of several components of the SnRK1 complex. This is E3 SUMO-protein ligase SIZ1 from Arabidopsis thaliana (Mouse-ear cress).